The sequence spans 442 residues: Trigger factor (442 aa).

The PPIase FKBP-type domain maps to 175 to 258 (GDFISISLHV…VNAVIEVSIP (84 aa)).

The protein belongs to the FKBP-type PPIase family. Tig subfamily.

The protein resides in the cytoplasm. The catalysed reaction is [protein]-peptidylproline (omega=180) = [protein]-peptidylproline (omega=0). Its function is as follows. Involved in protein export. Acts as a chaperone by maintaining the newly synthesized protein in an open conformation. Functions as a peptidyl-prolyl cis-trans isomerase. The chain is Trigger factor (tig) from Chlamydia pneumoniae (Chlamydophila pneumoniae).